The sequence spans 183 residues: Dual-action ribosomal maturation protein DarP (183 aa).

The protein belongs to the DarP family.

The protein localises to the cytoplasm. In terms of biological role, member of a network of 50S ribosomal subunit biogenesis factors which assembles along the 30S-50S interface, preventing incorrect 23S rRNA structures from forming. Promotes peptidyl transferase center (PTC) maturation. The chain is Dual-action ribosomal maturation protein DarP from Escherichia coli O7:K1 (strain IAI39 / ExPEC).